A 385-amino-acid chain; its full sequence is Prophage integrase IntS (385 aa).

The 82-residue stretch at 91 to 172 folds into the Core-binding (CB) domain; sequence NSFSAIYKEW…RCGEVFRYAI (82 aa). Residues 195–373 enclose the Tyr recombinase domain; the sequence is KNFPFLPADQ…QYLDKRREMM (179 aa). Active-site residues include R234, K261, H324, R327, and H350. The active-site O-(3'-phospho-DNA)-tyrosine intermediate is the Y360.

The protein belongs to the 'phage' integrase family.

In terms of biological role, integrase is necessary for integration of the phage into the host genome by site-specific recombination. In conjunction with excisionase, integrase is also necessary for excision of the prophage from the host genome. The sequence is that of Prophage integrase IntS (intS) from Escherichia coli (strain K12).